A 374-amino-acid chain; its full sequence is Methionine import ATP-binding protein MetN 2 (374 aa).

The interval 1–22 (MSVATLQRKLPEAAPRRAGQTE) is disordered. Residues 32 to 271 (VRFIGLGKTY…PQHEVSKTLL (240 aa)) enclose the ABC transporter domain. ATP is bound at residue 68–75 (GRSGAGKS).

Belongs to the ABC transporter superfamily. Methionine importer (TC 3.A.1.24) family. The complex is composed of two ATP-binding proteins (MetN), two transmembrane proteins (MetI) and a solute-binding protein (MetQ).

It is found in the cell inner membrane. It carries out the reaction L-methionine(out) + ATP + H2O = L-methionine(in) + ADP + phosphate + H(+). The enzyme catalyses D-methionine(out) + ATP + H2O = D-methionine(in) + ADP + phosphate + H(+). Part of the ABC transporter complex MetNIQ involved in methionine import. Responsible for energy coupling to the transport system. The chain is Methionine import ATP-binding protein MetN 2 from Pseudomonas fluorescens (strain ATCC BAA-477 / NRRL B-23932 / Pf-5).